A 1490-amino-acid chain; its full sequence is Leucine-rich repeat-containing protein 7 (1490 aa).

LRR repeat units lie at residues Ile23–Phe44, Thr47–Cys68, Ala70–Leu91, Asn93–Cys114, Cys116–Leu137, Asn139–Val161, Lys162–Leu183, Gln185–Ile206, Asn208–Leu229, Met231–Glu253, Ala254–Leu275, Lys277–Leu298, Leu300–Leu321, Ser323–Cys344, Asn346–Met367, Arg369–Lys391, and Glu392–Ala413. Residues Ser439, Ser441, and Ser443 each carry the phosphoserine modification. The span at Lys663–His676 shows a compositional bias: basic and acidic residues. 3 disordered regions span residues Lys663–Leu709, Asp775–Arg808, and Glu822–Pro899. Residues Cys677–Thr686 show a composition bias toward polar residues. Residues Tyr687–Ser700 are compositionally biased toward low complexity. Residues Glu787 to Ala799 are compositionally biased toward polar residues. Residue Thr831 is modified to Phosphothreonine. At Ser850 the chain carries Phosphoserine. The segment covering Pro859 to Leu871 has biased composition (low complexity). Residue Thr865 is modified to Phosphothreonine. Ser869 is subject to Phosphoserine. The span at Pro872 to Thr882 shows a compositional bias: basic and acidic residues. Phosphoserine occurs at positions 947, 949, and 1118. The residue at position 1149 (Arg1149) is an Omega-N-methylarginine. Residues Leu1194–Pro1217 show a composition bias toward polar residues. Positions Leu1194–Val1218 are disordered. Phosphoserine is present on Ser1233. Disordered regions lie at residues Gly1238–Lys1265 and Arg1282–Leu1312. Positions Lys1243 to Cys1263 are enriched in basic and acidic residues. A compositionally biased stretch (polar residues) spans Thr1286–Trp1307. Ser1288 and Ser1392 each carry phosphoserine. In terms of domain architecture, PDZ spans Glu1398–Leu1488.

The protein belongs to the LAP (LRR and PDZ) protein family. In terms of assembly, interacts with CNKSR2 and DLG4. Interacts with CTNND2/Catenin delta-2. Forms a complex with N-cadherin through CTNND2. Interacts with CAMK2A. Post-translationally, O-glycosylated and phosphorylated. Brain-specific. Highly concentrated at synapses.

The protein localises to the cytoplasm. It localises to the postsynaptic density. In terms of biological role, required for normal synaptic spine architecture and function. Necessary for DISC1 and GRM5 localization to postsynaptic density complexes and for both N-methyl D-aspartate receptor-dependent and metabotropic glutamate receptor-dependent long term depression. The chain is Leucine-rich repeat-containing protein 7 (Lrrc7) from Rattus norvegicus (Rat).